Consider the following 140-residue polypeptide: PDZ domain-containing protein 11 (140 aa).

Positions 47-129 constitute a PDZ domain; it reads TVVLKKPPGA…ITMRVRYFPY (83 aa).

Its subcellular location is the cytoplasm. The polypeptide is PDZ domain-containing protein 11 (PDZD11) (Gallus gallus (Chicken)).